The primary structure comprises 78 residues: Acyl carrier protein (78 aa).

The region spanning S2–K77 is the Carrier domain. The residue at position 37 (S37) is an O-(pantetheine 4'-phosphoryl)serine.

This sequence belongs to the acyl carrier protein (ACP) family. Post-translationally, 4'-phosphopantetheine is transferred from CoA to a specific serine of apo-ACP by AcpS. This modification is essential for activity because fatty acids are bound in thioester linkage to the sulfhydryl of the prosthetic group.

It is found in the cytoplasm. The protein operates within lipid metabolism; fatty acid biosynthesis. Functionally, carrier of the growing fatty acid chain in fatty acid biosynthesis. This is Acyl carrier protein from Novosphingobium aromaticivorans (strain ATCC 700278 / DSM 12444 / CCUG 56034 / CIP 105152 / NBRC 16084 / F199).